A 607-amino-acid chain; its full sequence is Hemagglutinin glycoprotein (607 aa).

The Intravirion portion of the chain corresponds to 1–38 (MFSHQDKVGAFYKNNARANSSKLSLVTDEVEERRSPWF). Residues 39–55 (LSILLILLVGILILLTI) form a helical; Signal-anchor for type II membrane protein membrane-spanning segment. The Virion surface segment spans residues 56-607 (TGIRFHQVVK…IRFSCDRLDP (552 aa)). N-linked (GlcNAc...) asparagine; by host glycosylation is found at Asn149, Asn276, Asn391, Asn422, Asn456, and Asn587.

The protein belongs to the paramyxoviruses hemagglutinin-neuraminidase family. Non-sialidase subfamily.

It localises to the virion membrane. The protein resides in the host membrane. In terms of biological role, attaches the virus to cell receptors and thereby initiating infection. Binding of H protein to the receptor induces a conformational change that allows the F protein to trigger virion/cell membranes fusion. This Phocidae (true seals) protein is Hemagglutinin glycoprotein (H).